Consider the following 104-residue polypeptide: UPF0235 protein RBE_0633 (104 aa).

Belongs to the UPF0235 family.

This Rickettsia bellii (strain RML369-C) protein is UPF0235 protein RBE_0633.